The primary structure comprises 554 residues: Dihydroxy-acid dehydratase (554 aa).

Cys48 serves as a coordination point for [2Fe-2S] cluster. Residue Asp80 participates in Mg(2+) binding. Position 121 (Cys121) interacts with [2Fe-2S] cluster. Asp122 and Lys123 together coordinate Mg(2+). Lys123 carries the post-translational modification N6-carboxylysine. A [2Fe-2S] cluster-binding site is contributed by Cys193. Glu444 contributes to the Mg(2+) binding site. Catalysis depends on Ser470, which acts as the Proton acceptor.

Belongs to the IlvD/Edd family. Homodimer. [2Fe-2S] cluster serves as cofactor. Mg(2+) is required as a cofactor.

It carries out the reaction (2R)-2,3-dihydroxy-3-methylbutanoate = 3-methyl-2-oxobutanoate + H2O. It catalyses the reaction (2R,3R)-2,3-dihydroxy-3-methylpentanoate = (S)-3-methyl-2-oxopentanoate + H2O. The protein operates within amino-acid biosynthesis; L-isoleucine biosynthesis; L-isoleucine from 2-oxobutanoate: step 3/4. Its pathway is amino-acid biosynthesis; L-valine biosynthesis; L-valine from pyruvate: step 3/4. Functionally, functions in the biosynthesis of branched-chain amino acids. Catalyzes the dehydration of (2R,3R)-2,3-dihydroxy-3-methylpentanoate (2,3-dihydroxy-3-methylvalerate) into 2-oxo-3-methylpentanoate (2-oxo-3-methylvalerate) and of (2R)-2,3-dihydroxy-3-methylbutanoate (2,3-dihydroxyisovalerate) into 2-oxo-3-methylbutanoate (2-oxoisovalerate), the penultimate precursor to L-isoleucine and L-valine, respectively. In Tremblaya princeps, this protein is Dihydroxy-acid dehydratase.